The chain runs to 61 residues: Small ribosomal subunit protein uS14 (61 aa).

Zn(2+) is bound by residues C24, C27, C40, and C43.

Belongs to the universal ribosomal protein uS14 family. Zinc-binding uS14 subfamily. In terms of assembly, part of the 30S ribosomal subunit. Contacts proteins S3 and S10. Zn(2+) is required as a cofactor.

Functionally, binds 16S rRNA, required for the assembly of 30S particles and may also be responsible for determining the conformation of the 16S rRNA at the A site. The protein is Small ribosomal subunit protein uS14 of Clostridium beijerinckii (strain ATCC 51743 / NCIMB 8052) (Clostridium acetobutylicum).